The primary structure comprises 578 residues: Lipoprotein A (578 aa).

Residues 1-27 form the signal peptide; sequence MNKKYFKKYSWVLILSTSILAPMTLAS. Cys28 carries N-palmitoyl cysteine lipidation. Cys28 is lipidated: S-diacylglycerol cysteine. 2 disordered regions span residues 35-135 and 172-203; these read KEDK…NTSA and AKDD…EVKD. Positions 41 to 50 are enriched in polar residues; that stretch reads NDSSNLSNKT. The span at 51 to 74 shows a compositional bias: basic and acidic residues; the sequence is NKSDPNDHLKDKDKNVSQDNKDST. The span at 75–96 shows a compositional bias: polar residues; the sequence is NKAVSNENSQTQSQKTNESSQN. A compositionally biased stretch (low complexity) spans 108–119; sequence ITNQNSSSNTKS. Residues 172 to 181 are compositionally biased toward basic and acidic residues; it reads AKDDSKEKSK.

It belongs to the M.pulmonis LipAB lipoprotein family.

It is found in the cell membrane. The protein is Lipoprotein A (lipA) of Mycoplasmopsis pulmonis (strain UAB CTIP) (Mycoplasma pulmonis).